The sequence spans 243 residues: 2-C-methyl-D-erythritol 4-phosphate cytidylyltransferase (243 aa).

It belongs to the IspD/TarI cytidylyltransferase family. IspD subfamily.

The enzyme catalyses 2-C-methyl-D-erythritol 4-phosphate + CTP + H(+) = 4-CDP-2-C-methyl-D-erythritol + diphosphate. Its pathway is isoprenoid biosynthesis; isopentenyl diphosphate biosynthesis via DXP pathway; isopentenyl diphosphate from 1-deoxy-D-xylulose 5-phosphate: step 2/6. Catalyzes the formation of 4-diphosphocytidyl-2-C-methyl-D-erythritol from CTP and 2-C-methyl-D-erythritol 4-phosphate (MEP). The chain is 2-C-methyl-D-erythritol 4-phosphate cytidylyltransferase from Chlorobium phaeovibrioides (strain DSM 265 / 1930) (Prosthecochloris vibrioformis (strain DSM 265)).